A 546-amino-acid polypeptide reads, in one-letter code: Chaperonin GroEL (546 aa).

ATP is bound by residues 30 to 33, Lys-51, 87 to 91, Gly-415, 479 to 481, and Asp-495; these read TLGP, DGTTT, and NAA. The interval 526–546 is disordered; the sequence is KKDEPAMPAGGGMGGMGGMDF. Over residues 534 to 546 the composition is skewed to gly residues; it reads AGGGMGGMGGMDF.

Belongs to the chaperonin (HSP60) family. Forms a cylinder of 14 subunits composed of two heptameric rings stacked back-to-back. Interacts with the co-chaperonin GroES.

It localises to the cytoplasm. The enzyme catalyses ATP + H2O + a folded polypeptide = ADP + phosphate + an unfolded polypeptide.. Its function is as follows. Together with its co-chaperonin GroES, plays an essential role in assisting protein folding. The GroEL-GroES system forms a nano-cage that allows encapsulation of the non-native substrate proteins and provides a physical environment optimized to promote and accelerate protein folding. The sequence is that of Chaperonin GroEL from Xanthomonas campestris pv. campestris (strain 8004).